The primary structure comprises 89 residues: Probable Fe(2+)-trafficking protein (89 aa).

The protein belongs to the Fe(2+)-trafficking protein family.

In terms of biological role, could be a mediator in iron transactions between iron acquisition and iron-requiring processes, such as synthesis and/or repair of Fe-S clusters in biosynthetic enzymes. The protein is Probable Fe(2+)-trafficking protein of Stenotrophomonas maltophilia (strain R551-3).